A 310-amino-acid chain; its full sequence is DNA damage-repair/toleration protein DRT102 (310 aa).

Ala-2 carries the post-translational modification N-acetylalanine. Residues 219–282 enclose the Cupin type-2 domain; sequence IVRFKAGSVE…HRVKYHEDTE (64 aa).

The polypeptide is DNA damage-repair/toleration protein DRT102 (DRT102) (Arabidopsis thaliana (Mouse-ear cress)).